The following is a 280-amino-acid chain: Large ribosomal subunit protein uL2 (280 aa).

The disordered stretch occupies residues 229–280 (DHPHGGGEGKAPIGHPSPLTPWGKPTLGYKTRKKRKPSDRFIIQRANDKKEK).

This sequence belongs to the universal ribosomal protein uL2 family. In terms of assembly, part of the 50S ribosomal subunit. Forms a bridge to the 30S subunit in the 70S ribosome.

One of the primary rRNA binding proteins. Required for association of the 30S and 50S subunits to form the 70S ribosome, for tRNA binding and peptide bond formation. It has been suggested to have peptidyltransferase activity; this is somewhat controversial. Makes several contacts with the 16S rRNA in the 70S ribosome. This Dictyoglomus turgidum (strain DSM 6724 / Z-1310) protein is Large ribosomal subunit protein uL2.